The primary structure comprises 351 residues: Uroporphyrinogen decarboxylase (351 aa).

Substrate is bound by residues 25-29 (RQAGR), Asp74, Tyr151, Ser206, and His325.

It belongs to the uroporphyrinogen decarboxylase family. Homodimer.

It localises to the cytoplasm. It carries out the reaction uroporphyrinogen III + 4 H(+) = coproporphyrinogen III + 4 CO2. It functions in the pathway porphyrin-containing compound metabolism; protoporphyrin-IX biosynthesis; coproporphyrinogen-III from 5-aminolevulinate: step 4/4. Catalyzes the decarboxylation of four acetate groups of uroporphyrinogen-III to yield coproporphyrinogen-III. The protein is Uroporphyrinogen decarboxylase of Chlorobium phaeovibrioides (strain DSM 265 / 1930) (Prosthecochloris vibrioformis (strain DSM 265)).